We begin with the raw amino-acid sequence, 136 residues long: Large ribosomal subunit protein uL16 (136 aa).

Belongs to the universal ribosomal protein uL16 family. Part of the 50S ribosomal subunit.

Functionally, binds 23S rRNA and is also seen to make contacts with the A and possibly P site tRNAs. This chain is Large ribosomal subunit protein uL16, found in Pelagibacter ubique (strain HTCC1062).